Here is a 447-residue protein sequence, read N- to C-terminus: Tubulin beta chain (447 aa).

Gln-11, Glu-69, Ser-138, Gly-142, Thr-143, Gly-144, Asn-204, and Asn-226 together coordinate GTP. Glu-69 lines the Mg(2+) pocket. Residues 421-447 (EYQQYQDASISEGEEEYEEEAPMEPEE) form a disordered region. Acidic residues predominate over residues 432-447 (EGEEEYEEEAPMEPEE).

It belongs to the tubulin family. In terms of assembly, dimer of alpha and beta chains. A typical microtubule is a hollow water-filled tube with an outer diameter of 25 nm and an inner diameter of 15 nM. Alpha-beta heterodimers associate head-to-tail to form protofilaments running lengthwise along the microtubule wall with the beta-tubulin subunit facing the microtubule plus end conferring a structural polarity. Microtubules usually have 13 protofilaments but different protofilament numbers can be found in some organisms and specialized cells. Requires Mg(2+) as cofactor.

The protein resides in the cytoplasm. Its subcellular location is the cytoskeleton. Tubulin is the major constituent of microtubules, a cylinder consisting of laterally associated linear protofilaments composed of alpha- and beta-tubulin heterodimers. Microtubules grow by the addition of GTP-tubulin dimers to the microtubule end, where a stabilizing cap forms. Below the cap, tubulin dimers are in GDP-bound state, owing to GTPase activity of alpha-tubulin. This chain is Tubulin beta chain, found in Rhynchosporium secalis (Barley scald fungus).